The chain runs to 163 residues: Crossover junction endodeoxyribonuclease RuvC (163 aa).

Active-site residues include Asp7, Glu67, and Asp140. Asp7, Glu67, and Asp140 together coordinate Mg(2+).

Belongs to the RuvC family. Homodimer which binds Holliday junction (HJ) DNA. The HJ becomes 2-fold symmetrical on binding to RuvC with unstacked arms; it has a different conformation from HJ DNA in complex with RuvA. In the full resolvosome a probable DNA-RuvA(4)-RuvB(12)-RuvC(2) complex forms which resolves the HJ. The cofactor is Mg(2+).

The protein localises to the cytoplasm. The enzyme catalyses Endonucleolytic cleavage at a junction such as a reciprocal single-stranded crossover between two homologous DNA duplexes (Holliday junction).. Its function is as follows. The RuvA-RuvB-RuvC complex processes Holliday junction (HJ) DNA during genetic recombination and DNA repair. Endonuclease that resolves HJ intermediates. Cleaves cruciform DNA by making single-stranded nicks across the HJ at symmetrical positions within the homologous arms, yielding a 5'-phosphate and a 3'-hydroxyl group; requires a central core of homology in the junction. The consensus cleavage sequence is 5'-(A/T)TT(C/G)-3'. Cleavage occurs on the 3'-side of the TT dinucleotide at the point of strand exchange. HJ branch migration catalyzed by RuvA-RuvB allows RuvC to scan DNA until it finds its consensus sequence, where it cleaves and resolves the cruciform DNA. The sequence is that of Crossover junction endodeoxyribonuclease RuvC from Desulforamulus reducens (strain ATCC BAA-1160 / DSM 100696 / MI-1) (Desulfotomaculum reducens).